A 459-amino-acid chain; its full sequence is Putrescine aminotransferase (459 aa).

Pyridoxal 5'-phosphate is bound by residues 150–151 (GT) and Gln-274. N6-(pyridoxal phosphate)lysine is present on Lys-300. Residue Thr-332 coordinates pyridoxal 5'-phosphate.

This sequence belongs to the class-III pyridoxal-phosphate-dependent aminotransferase family. Putrescine aminotransferase subfamily. Pyridoxal 5'-phosphate is required as a cofactor.

The catalysed reaction is an alkane-alpha,omega-diamine + 2-oxoglutarate = an omega-aminoaldehyde + L-glutamate. It catalyses the reaction putrescine + 2-oxoglutarate = 1-pyrroline + L-glutamate + H2O. It carries out the reaction cadaverine + 2-oxoglutarate = 5-aminopentanal + L-glutamate. Its pathway is amine and polyamine degradation; putrescine degradation; 4-aminobutanal from putrescine (transaminase route): step 1/1. In terms of biological role, catalyzes the aminotransferase reaction from putrescine to 2-oxoglutarate, leading to glutamate and 4-aminobutanal, which spontaneously cyclizes to form 1-pyrroline. This is the first step in one of two pathways for putrescine degradation, where putrescine is converted into 4-aminobutanoate (gamma-aminobutyrate or GABA) via 4-aminobutanal. Also functions as a cadaverine transaminase in a a L-lysine degradation pathway to succinate that proceeds via cadaverine, glutarate and L-2-hydroxyglutarate. This chain is Putrescine aminotransferase, found in Salmonella dublin (strain CT_02021853).